Consider the following 406-residue polypeptide: 11-beta-hydroxysteroid dehydrogenase type 2 (406 aa).

Position 82–111 (82–111 (TRAVLITGCDSGFGKETAKKLDAMGFTVLA)) interacts with NAD(+). Ser-219 contacts substrate. Tyr-232 serves as the catalytic Proton acceptor. Residues 379 to 406 (GQPGATPAPDTAQDNPNPNPDPSLVGAR) are disordered.

This sequence belongs to the short-chain dehydrogenases/reductases (SDR) family. As to quaternary structure, interacts with ligand-free cytoplasmic NR3C2. As to expression, highly expressed in the kidney.

Its subcellular location is the microsome. The protein localises to the endoplasmic reticulum. The catalysed reaction is an 11beta-hydroxysteroid + NAD(+) = an 11-oxosteroid + NADH + H(+). The enzyme catalyses corticosterone + NAD(+) = 11-dehydrocorticosterone + NADH + H(+). It carries out the reaction cortisol + NAD(+) = cortisone + NADH + H(+). It catalyses the reaction 11beta,17beta-dihydroxyandrost-4-ene-3-one + NAD(+) = 17beta-hydroxyandrost-4-ene-3,11-dione + NADH + H(+). The catalysed reaction is 11beta-hydroxyandrost-4-ene-3,17-dione + NAD(+) = androst-4-ene-3,11,17-trione + NADH + H(+). It participates in steroid metabolism. Inhibited by carbenoloxone. Catalyzes the conversion of biologically active 11beta-hydroxyglucocorticoids (11beta-hydroxysteroid) such as corticosterone, to inactive 11-ketoglucocorticoids (11-oxosteroid) such as 11-dehydrocorticosterone, in the presence of NAD(+). Functions as a dehydrogenase (oxidase), thereby decreasing the concentration of active glucocorticoids, thus protecting the nonselective mineralocorticoid receptor from occupation by glucocorticoids. Plays an important role in maintaining glucocorticoids balance during preimplantation and protects the fetus from excessive maternal corticosterone exposure. Catalyzes the oxidation of 11beta-hydroxytestosterone (11beta,17beta-dihydroxyandrost-4-ene-3-one) to 11-ketotestosterone (17beta-hydroxyandrost-4-ene-3,11-dione), a major bioactive androgen. Catalyzes the conversion of 11beta-hydroxyandrostenedione (11beta-hydroxyandrost-4-ene-3,17-dione) to 11-ketoandrostenedione (androst-4-ene-3,11,17-trione), which can be further metabolized to 11-ketotestosterone. Converts 7-beta-25-dihydroxycholesterol to 7-oxo-25-hydroxycholesterol in vitro. 7-beta-25-dihydroxycholesterol (not 7-oxo-25-hydroxycholesterol) acts as a ligand for the G-protein-coupled receptor (GPCR) Epstein-Barr virus-induced gene 2 (EBI2) and may thereby regulate immune cell migration. May protect ovulating oocytes and fertilizing spermatozoa from the adverse effects of cortisol. This chain is 11-beta-hydroxysteroid dehydrogenase type 2 (HSD11B2), found in Oryctolagus cuniculus (Rabbit).